We begin with the raw amino-acid sequence, 397 residues long: Nickel-cobalt-cadmium resistance protein NccB (397 aa).

Residues 10–30 (PSWPMIAGVAAAAALVGFGAA) form a helical membrane-spanning segment. The stretch at 137–195 (EAAAMAAERKVAQARADLARKTYERESSLFQQGVTPRQEMESARIALDVAQAEVQRAAT) forms a coiled coil.

This sequence belongs to the membrane fusion protein (MFP) (TC 8.A.1) family.

The protein resides in the cell inner membrane. Component of the NCC cation efflux system that confers resistance to nickel, cobalt and cadmium. This Alcaligenes xylosoxydans xylosoxydans (Achromobacter xylosoxidans) protein is Nickel-cobalt-cadmium resistance protein NccB (nccB).